The primary structure comprises 208 residues: Uracil phosphoribosyltransferase (208 aa).

Residues arginine 78, arginine 103, and 130–138 (DPMFATGGT) each bind 5-phospho-alpha-D-ribose 1-diphosphate. Uracil-binding positions include isoleucine 193 and 198-200 (GDA). Aspartate 199 is a 5-phospho-alpha-D-ribose 1-diphosphate binding site.

It belongs to the UPRTase family. Mg(2+) is required as a cofactor.

It catalyses the reaction UMP + diphosphate = 5-phospho-alpha-D-ribose 1-diphosphate + uracil. It functions in the pathway pyrimidine metabolism; UMP biosynthesis via salvage pathway; UMP from uracil: step 1/1. With respect to regulation, allosterically activated by GTP. In terms of biological role, catalyzes the conversion of uracil and 5-phospho-alpha-D-ribose 1-diphosphate (PRPP) to UMP and diphosphate. The polypeptide is Uracil phosphoribosyltransferase (Campylobacter curvus (strain 525.92)).